We begin with the raw amino-acid sequence, 344 residues long: MIRTVKPKNARAKRALVKREAKLVENVKQALFIPGQSCNKNLHDIMVDLSALKKPDMKRFNRKNDIHPFEDMSPLEFFSEKNDCSLMVLMTSSKKRKNNMTFIRTFGYKIYDMIELMVADNFKLLSDFKKLTFTVGLKPMFTFQGAAFDTHPVYKQIKSLFLDFFRGESTDLQDVAGLQHVISMTIQGDFQDGEPLPNVLFRVYKLKSYKSDQGGKRLPRIELVEIGPRLDFKIGRIHTPSPDMVTEAHKKPKQLEMKTKKNVELDIMGDKLGRIHMGKQDLGKLQTRKMKGLKSKFDQGTEEGDGEVDEDYEDEASYSDDGQEYEEEFVSATDIEPSAKRQKK.

In terms of domain architecture, Brix spans 28-243 (KQALFIPGQS…IGRIHTPSPD (216 aa)). Ser-73 is modified (phosphoserine). The segment at 291-344 (KGLKSKFDQGTEEGDGEVDEDYEDEASYSDDGQEYEEEFVSATDIEPSAKRQKK) is disordered. Acidic residues predominate over residues 300-329 (GTEEGDGEVDEDYEDEASYSDDGQEYEEEF).

This sequence belongs to the RPF2 family. As to quaternary structure, part of a complex that includes BRX1, RPF1, RPF2 and SSF1 or SSF2. Component of a hexameric 5S RNP precursor complex, composed of 5S RNA, RRS1, RPF2, RPL5, RPL11A/RPL11B and SYO1; this complex acts as a precursor for ribosome assembly.

The protein localises to the nucleus. Its subcellular location is the nucleolus. Required for biogenesis of the 60S ribosomal subunit. The polypeptide is Ribosome biogenesis protein RPF2 (RPF2) (Saccharomyces cerevisiae (strain ATCC 204508 / S288c) (Baker's yeast)).